The chain runs to 444 residues: NAD-capped RNA hydrolase NUDT12 (444 aa).

2 ANK repeats span residues 11-40 and 60-80; these read EIISQFHYSAAEGDIAKLTAILSHSPSLLN and SRQTALDIAKFWGYKHIANLL. At Lys167 the chain carries N6-succinyllysine. Zn(2+) is bound by residues Cys266 and Cys269. Lys274 is subject to N6-succinyllysine. Residues Cys284 and Cys289 each coordinate Zn(2+). Residues Tyr300, 336-338, Glu352, Glu356, and Glu397 contribute to the substrate site; that span reads AGF. Residues 301 to 435 enclose the Nudix hydrolase domain; sequence PRVDPVVIMQ…SRAIAHQLIK (135 aa). The Mg(2+) site is built by Ala336, Glu352, Glu356, and Glu397. A Nudix box motif is present at residues 337–358; that stretch reads GFIEPGETIEDAVRREVEEESG. The Microbody targeting signal signature appears at 442-444; the sequence is PNL.

It belongs to the Nudix hydrolase family. NudC subfamily. Homodimer. Homodimerization is essential for its catalytic activity and protein stability. Interacts (via ANK repeats) with BLMH. It depends on Mg(2+) as a cofactor. Zn(2+) is required as a cofactor.

It localises to the cytoplasm. Its subcellular location is the peroxisome. It is found in the cytoplasmic granule. It carries out the reaction a 5'-end NAD(+)-phospho-ribonucleoside in mRNA + H2O = a 5'-end phospho-adenosine-phospho-ribonucleoside in mRNA + beta-nicotinamide D-ribonucleotide + 2 H(+). The catalysed reaction is NAD(+) + H2O = beta-nicotinamide D-ribonucleotide + AMP + 2 H(+). The enzyme catalyses NADH + H2O = reduced beta-nicotinamide D-ribonucleotide + AMP + 2 H(+). It catalyses the reaction NADPH + H2O = reduced beta-nicotinamide D-ribonucleotide + adenosine 2',5'-bisphosphate + 2 H(+). Its function is as follows. mRNA decapping enzyme that specifically removes the nicotinamide adenine dinucleotide (NAD) cap from a subset of mRNAs by hydrolyzing the diphosphate linkage to produce nicotinamide mononucleotide (NMN) and 5' monophosphate mRNA. The NAD-cap is present at the 5'-end of some RNAs; in contrast to the canonical N7 methylguanosine (m7G) cap, the NAD cap promotes mRNA decay. Preferentially acts on NAD-capped transcripts in response to nutrient stress. Also acts on free nicotinamide adenine dinucleotide molecules: hydrolyzes NAD(H) into NMN(H) and AMP, and NADPH into NMNH and 2',5'-ADP. May act to regulate the concentration of peroxisomal nicotinamide nucleotide cofactors required for oxidative metabolism in this organelle. Regulates the levels of circadian clock components PER1, PER2, PER3 and CRY2 in the liver. The protein is NAD-capped RNA hydrolase NUDT12 of Bos taurus (Bovine).